A 311-amino-acid chain; its full sequence is tRNA-cytidine(32) 2-sulfurtransferase (311 aa).

Positions 47–52 match the PP-loop motif motif; the sequence is SGGKDS. Cys122, Cys125, and Cys213 together coordinate [4Fe-4S] cluster.

Belongs to the TtcA family. Homodimer. Requires Mg(2+) as cofactor. The cofactor is [4Fe-4S] cluster.

It is found in the cytoplasm. The enzyme catalyses cytidine(32) in tRNA + S-sulfanyl-L-cysteinyl-[cysteine desulfurase] + AH2 + ATP = 2-thiocytidine(32) in tRNA + L-cysteinyl-[cysteine desulfurase] + A + AMP + diphosphate + H(+). The protein operates within tRNA modification. In terms of biological role, catalyzes the ATP-dependent 2-thiolation of cytidine in position 32 of tRNA, to form 2-thiocytidine (s(2)C32). The sulfur atoms are provided by the cysteine/cysteine desulfurase (IscS) system. The protein is tRNA-cytidine(32) 2-sulfurtransferase of Escherichia fergusonii (strain ATCC 35469 / DSM 13698 / CCUG 18766 / IAM 14443 / JCM 21226 / LMG 7866 / NBRC 102419 / NCTC 12128 / CDC 0568-73).